A 106-amino-acid chain; its full sequence is Putative protein LRRC37A5P (106 aa).

The polypeptide is Putative protein LRRC37A5P (LRRC37A5P) (Homo sapiens (Human)).